Reading from the N-terminus, the 62-residue chain is Photosystem II reaction center protein Z (62 aa).

Transmembrane regions (helical) follow at residues 8–28 (ALFA…IVFA) and 41–61 (FSGT…NSLI).

Belongs to the PsbZ family. As to quaternary structure, PSII is composed of 1 copy each of membrane proteins PsbA, PsbB, PsbC, PsbD, PsbE, PsbF, PsbH, PsbI, PsbJ, PsbK, PsbL, PsbM, PsbT, PsbY, PsbZ, Psb30/Ycf12, at least 3 peripheral proteins of the oxygen-evolving complex and a large number of cofactors. It forms dimeric complexes.

The protein localises to the plastid. It localises to the chloroplast thylakoid membrane. May control the interaction of photosystem II (PSII) cores with the light-harvesting antenna, regulates electron flow through the 2 photosystem reaction centers. PSII is a light-driven water plastoquinone oxidoreductase, using light energy to abstract electrons from H(2)O, generating a proton gradient subsequently used for ATP formation. In Drimys granadensis, this protein is Photosystem II reaction center protein Z.